The sequence spans 2055 residues: Dedicator of cytokinesis protein 9 (2055 aa).

2 positions are modified to phosphoserine: Ser-178 and Ser-181. The PH domain maps to 185 to 292 (GITKHGWLYK…WVTVLNKILQ (108 aa)). Positions 301-326 (EKRNGDPHEDDEQSKLEGSGSGLDSY) are disordered. Phosphoserine occurs at positions 444 and 453. One can recognise a C2 DOCK-type domain in the interval 649–827 (SNHLYVYPKY…PLLKISTHLV (179 aa)). 2 positions are modified to phosphoserine: Ser-936 and Ser-1244. The residue at position 1250 (Thr-1250) is a Phosphothreonine. A disordered region spans residues 1253 to 1291 (INSVRNADSRGSLISTDSGNSLPDRNPEKSNSLDKQQQS). Ser-1264, Ser-1270, and Ser-1273 each carry phosphoserine. The segment covering 1264 to 1276 (SLISTDSGNSLPD) has biased composition (polar residues). In terms of domain architecture, DOCKER spans 1614-2055 (KSYASTPELR…LSDIMREQMG (442 aa)). The segment at 1679 to 2055 (DEEASMMEDV…LSDIMREQMG (377 aa)) is interaction with CDC42.

It belongs to the DOCK family. As to quaternary structure, homodimer. Interacts preferentially with nucleotide-depleted CDC42. In terms of tissue distribution, expressed in lung. Also detected in Peyers patches, thymus, brain and lymph nodes. Expressed in Purkinje cells.

The protein localises to the endomembrane system. Guanine nucleotide-exchange factor (GEF) that activates CDC42 by exchanging bound GDP for free GTP. Overexpression induces filopodia formation. The polypeptide is Dedicator of cytokinesis protein 9 (Mus musculus (Mouse)).